Reading from the N-terminus, the 271-residue chain is Ribosomal RNA small subunit methyltransferase A (271 aa).

S-adenosyl-L-methionine-binding residues include histidine 11, leucine 13, glycine 38, glutamate 58, aspartate 86, and asparagine 101.

This sequence belongs to the class I-like SAM-binding methyltransferase superfamily. rRNA adenine N(6)-methyltransferase family. RsmA subfamily.

It is found in the cytoplasm. The catalysed reaction is adenosine(1518)/adenosine(1519) in 16S rRNA + 4 S-adenosyl-L-methionine = N(6)-dimethyladenosine(1518)/N(6)-dimethyladenosine(1519) in 16S rRNA + 4 S-adenosyl-L-homocysteine + 4 H(+). Its function is as follows. Specifically dimethylates two adjacent adenosines (A1518 and A1519) in the loop of a conserved hairpin near the 3'-end of 16S rRNA in the 30S particle. May play a critical role in biogenesis of 30S subunits. The chain is Ribosomal RNA small subunit methyltransferase A from Helicobacter pylori (strain Shi470).